The sequence spans 491 residues: Ketol-acid reductoisomerase (NADP(+)) (491 aa).

In terms of domain architecture, KARI N-terminal Rossmann spans 15 to 208 (AQLGKCRFMG…GGHRAGVLES (194 aa)). NADP(+) is bound by residues 45–48 (CGAQ), Arg-68, Arg-76, Ser-78, and 108–110 (DKQ). The active site involves His-132. Gly-158 contributes to the NADP(+) binding site. KARI C-terminal knotted domains are found at residues 209-344 (SFVA…TAPQ) and 345-484 (YEGK…MTDM). Mg(2+) is bound by residues Asp-217, Glu-221, Glu-389, and Glu-393. Residue Ser-414 coordinates substrate.

Belongs to the ketol-acid reductoisomerase family. Requires Mg(2+) as cofactor.

It catalyses the reaction (2R)-2,3-dihydroxy-3-methylbutanoate + NADP(+) = (2S)-2-acetolactate + NADPH + H(+). The enzyme catalyses (2R,3R)-2,3-dihydroxy-3-methylpentanoate + NADP(+) = (S)-2-ethyl-2-hydroxy-3-oxobutanoate + NADPH + H(+). It functions in the pathway amino-acid biosynthesis; L-isoleucine biosynthesis; L-isoleucine from 2-oxobutanoate: step 2/4. Its pathway is amino-acid biosynthesis; L-valine biosynthesis; L-valine from pyruvate: step 2/4. Functionally, involved in the biosynthesis of branched-chain amino acids (BCAA). Catalyzes an alkyl-migration followed by a ketol-acid reduction of (S)-2-acetolactate (S2AL) to yield (R)-2,3-dihydroxy-isovalerate. In the isomerase reaction, S2AL is rearranged via a Mg-dependent methyl migration to produce 3-hydroxy-3-methyl-2-ketobutyrate (HMKB). In the reductase reaction, this 2-ketoacid undergoes a metal-dependent reduction by NADPH to yield (R)-2,3-dihydroxy-isovalerate. The sequence is that of Ketol-acid reductoisomerase (NADP(+)) from Escherichia coli (strain 55989 / EAEC).